The chain runs to 85 residues: Glutaredoxin 1 (85 aa).

The region spanning 1 to 85 is the Glutaredoxin domain; the sequence is MQTVIFGRSG…AAWVKENLDA (85 aa). Residues Cys11 and Cys14 are joined by a disulfide bond.

It belongs to the glutaredoxin family. In terms of assembly, monomer.

The disulfide bond functions as an electron carrier in the glutathione-dependent synthesis of deoxyribonucleotides by the enzyme ribonucleotide reductase. In addition, it is also involved in reducing some disulfides in a coupled system with glutathione reductase. The polypeptide is Glutaredoxin 1 (grxA) (Shigella flexneri).